Here is a 428-residue protein sequence, read N- to C-terminus: MATVTYPSSEPTTLDPGNASSTWPLDTTLGNTSAGASLTGLAVSGILISLVYLVVCVVGLLGNSLVIYVVLRHTSSPSVTSVYILNLALADELFMLGLPFLAAQNALSYWPFGSLMCRLVMAVDGINQFTSIFCLTVMSVDRYLAVVHPTRSARWRTAPVARTVSAAVWVASAVVVLPVVVFSGVPRGMSTCHMQWPEPAAAWRTAFIIYTAALGFFGPLLVICLCYLLIVVKVRSTTRRVRAPSCQWVQAPACQRRRRSERRVTRMVVAVVALFVLCWMPFYLLNIVNVVCPLPEEPAFFGLYFLVVALPYANSCANPILYGFLSYRFKQGFRRILLRPSRRIRSQEPGSGPPEKTEEEEDEEEEERREEEERRMQRGQEMNGRLSQIAQAGTSGQQPRPCTGTAKEQQLLPQEATAGDKASTLSHL.

A compositionally biased stretch (polar residues) spans 1–12 (MATVTYPSSEPT). Residues 1–20 (MATVTYPSSEPTTLDPGNAS) form a disordered region. The Extracellular portion of the chain corresponds to 1–45 (MATVTYPSSEPTTLDPGNASSTWPLDTTLGNTSAGASLTGLAVSG). N-linked (GlcNAc...) asparagine glycosylation is found at Asn-18 and Asn-31. A helical transmembrane segment spans residues 46–71 (ILISLVYLVVCVVGLLGNSLVIYVVL). Residues 72–81 (RHTSSPSVTS) are Cytoplasmic-facing. Residues 82–103 (VYILNLALADELFMLGLPFLAA) form a helical membrane-spanning segment. Over 104 to 118 (QNALSYWPFGSLMCR) the chain is Extracellular. Cys-117 and Cys-192 are oxidised to a cystine. A helical transmembrane segment spans residues 119 to 140 (LVMAVDGINQFTSIFCLTVMSV). Residues 141–162 (DRYLAVVHPTRSARWRTAPVAR) lie on the Cytoplasmic side of the membrane. Residues 163–182 (TVSAAVWVASAVVVLPVVVF) form a helical membrane-spanning segment. The Extracellular segment spans residues 183-206 (SGVPRGMSTCHMQWPEPAAAWRTA). A helical membrane pass occupies residues 207–232 (FIIYTAALGFFGPLLVICLCYLLIVV). Topologically, residues 233-266 (KVRSTTRRVRAPSCQWVQAPACQRRRRSERRVTR) are cytoplasmic. The chain crosses the membrane as a helical span at residues 267–288 (MVVAVVALFVLCWMPFYLLNIV). The Extracellular segment spans residues 289 to 302 (NVVCPLPEEPAFFG). Residues 303 to 325 (LYFLVVALPYANSCANPILYGFL) form a helical membrane-spanning segment. Residues 326–428 (SYRFKQGFRR…GDKASTLSHL (103 aa)) lie on the Cytoplasmic side of the membrane. Residues Ser-341, Ser-346, and Ser-351 each carry the phosphoserine modification. Positions 344–428 (IRSQEPGSGP…GDKASTLSHL (85 aa)) are disordered. Thr-357 bears the Phosphothreonine mark. A compositionally biased stretch (acidic residues) spans 357–370 (TEEEEDEEEEERRE). A compositionally biased stretch (polar residues) spans 385-412 (RLSQIAQAGTSGQQPRPCTGTAKEQQLL).

The protein belongs to the G-protein coupled receptor 1 family. As to quaternary structure, homodimer and heterodimer with SSTR2. Heterodimerization with SSTR2 inactivates SSTR3 receptor function. Phosphorylated. Phosphorylation increases upon somatostatin binding. In the brain, primarily observed in the forebrain. Moderate levels found throughout laminae 2-6 of the neocortex and allocortex, and high levels in lamina 2 of the piriform and entorhinal cortices. High levels also present in the cornu ammonis fields of the hippocampus. In the amygdala, highly expressed in the nucleus of the lateral olfactory tract with expression also detected in the rostral portions of the basal magnocellular and lateral nuclei. In the diencephalon, moderate levels observed in the ventromedial and arcuate nuclei of the hypothalamus. In the midbrain, moderate levels found in the lateral portion of the substantia nigra pars reticulata.

It localises to the cell membrane. Receptor for somatostatin-14 and -28. This receptor is coupled via pertussis toxin sensitive G proteins to inhibition of adenylyl cyclase. In Mus musculus (Mouse), this protein is Somatostatin receptor type 3 (Sstr3).